Here is a 60-residue protein sequence, read N- to C-terminus: Large ribosomal subunit protein bL33 (60 aa).

The protein belongs to the bacterial ribosomal protein bL33 family.

This chain is Large ribosomal subunit protein bL33, found in Flavobacterium psychrophilum (strain ATCC 49511 / DSM 21280 / CIP 103535 / JIP02/86).